Consider the following 89-residue polypeptide: UPF0297 protein SUB1776 (89 aa).

This sequence belongs to the UPF0297 family.

This chain is UPF0297 protein SUB1776, found in Streptococcus uberis (strain ATCC BAA-854 / 0140J).